Reading from the N-terminus, the 437-residue chain is Glutamate-1-semialdehyde 2,1-aminomutase (437 aa).

An N6-(pyridoxal phosphate)lysine modification is found at K277.

The protein belongs to the class-III pyridoxal-phosphate-dependent aminotransferase family. HemL subfamily. Homodimer. Requires pyridoxal 5'-phosphate as cofactor.

The protein localises to the cytoplasm. The catalysed reaction is (S)-4-amino-5-oxopentanoate = 5-aminolevulinate. It participates in porphyrin-containing compound metabolism; protoporphyrin-IX biosynthesis; 5-aminolevulinate from L-glutamyl-tRNA(Glu): step 2/2. It functions in the pathway porphyrin-containing compound metabolism; chlorophyll biosynthesis. This Thermosynechococcus vestitus (strain NIES-2133 / IAM M-273 / BP-1) protein is Glutamate-1-semialdehyde 2,1-aminomutase.